We begin with the raw amino-acid sequence, 188 residues long: Molybdopterin synthase catalytic subunit (188 aa).

The segment covering 1–14 has biased composition (low complexity); sequence MATQPPQDQTSTTP. Residues 1 to 23 are disordered; that stretch reads MATQPPQDQTSTTPSLPPHLDPT. Substrate contacts are provided by residues 134 to 135, Lys-150, and 157 to 159; these read HR and KRE.

Belongs to the MoaE family. MOCS2B subfamily. Heterotetramer; composed of 2 small (MOCS2A) and 2 large (MOCS2B) subunits.

Its subcellular location is the cytoplasm. It catalyses the reaction 2 [molybdopterin-synthase sulfur-carrier protein]-C-terminal-Gly-aminoethanethioate + cyclic pyranopterin phosphate + H2O = molybdopterin + 2 [molybdopterin-synthase sulfur-carrier protein]-C-terminal Gly-Gly + 2 H(+). It functions in the pathway cofactor biosynthesis; molybdopterin biosynthesis. In terms of biological role, catalytic subunit of the molybdopterin synthase complex, a complex that catalyzes the conversion of precursor Z into molybdopterin. Acts by mediating the incorporation of 2 sulfur atoms from thiocarboxylated MOCS2A into precursor Z to generate a dithiolene group. This chain is Molybdopterin synthase catalytic subunit, found in Aspergillus fumigatus (strain ATCC MYA-4609 / CBS 101355 / FGSC A1100 / Af293) (Neosartorya fumigata).